The following is a 190-amino-acid chain: Pyridoxal 5'-phosphate synthase subunit PdxT (190 aa).

Residue 46–48 (GES) coordinates L-glutamine. The active-site Nucleophile is Cys78. Residues Arg105 and 133–134 (IR) contribute to the L-glutamine site. Catalysis depends on charge relay system residues His169 and Glu171.

It belongs to the glutaminase PdxT/SNO family. In terms of assembly, in the presence of PdxS, forms a dodecamer of heterodimers. Only shows activity in the heterodimer.

The enzyme catalyses aldehydo-D-ribose 5-phosphate + D-glyceraldehyde 3-phosphate + L-glutamine = pyridoxal 5'-phosphate + L-glutamate + phosphate + 3 H2O + H(+). It catalyses the reaction L-glutamine + H2O = L-glutamate + NH4(+). Its pathway is cofactor biosynthesis; pyridoxal 5'-phosphate biosynthesis. In terms of biological role, catalyzes the hydrolysis of glutamine to glutamate and ammonia as part of the biosynthesis of pyridoxal 5'-phosphate. The resulting ammonia molecule is channeled to the active site of PdxS. The polypeptide is Pyridoxal 5'-phosphate synthase subunit PdxT (Niallia circulans (Bacillus circulans)).